A 220-amino-acid polypeptide reads, in one-letter code: Probable GTP-binding protein EngB (220 aa).

Residues 26–200 form the EngB-type G domain; it reads EGIEIAFAGR…RAKLDEWYAP (175 aa). GTP is bound by residues 34–41, 61–65, 79–82, 146–149, and 179–181; these read GRSNTGKS, GRTQL, DLPG, TKAD, and FSS. Residues serine 41 and threonine 63 each coordinate Mg(2+).

It belongs to the TRAFAC class TrmE-Era-EngA-EngB-Septin-like GTPase superfamily. EngB GTPase family. Requires Mg(2+) as cofactor.

In terms of biological role, necessary for normal cell division and for the maintenance of normal septation. This Vibrio cholerae serotype O1 (strain ATCC 39541 / Classical Ogawa 395 / O395) protein is Probable GTP-binding protein EngB.